We begin with the raw amino-acid sequence, 149 residues long: 3-hydroxyacyl-[acyl-carrier-protein] dehydratase FabZ (149 aa).

Residue histidine 53 is part of the active site.

Belongs to the thioester dehydratase family. FabZ subfamily.

Its subcellular location is the cytoplasm. It catalyses the reaction a (3R)-hydroxyacyl-[ACP] = a (2E)-enoyl-[ACP] + H2O. Functionally, involved in unsaturated fatty acids biosynthesis. Catalyzes the dehydration of short chain beta-hydroxyacyl-ACPs and long chain saturated and unsaturated beta-hydroxyacyl-ACPs. In Polynucleobacter asymbioticus (strain DSM 18221 / CIP 109841 / QLW-P1DMWA-1) (Polynucleobacter necessarius subsp. asymbioticus), this protein is 3-hydroxyacyl-[acyl-carrier-protein] dehydratase FabZ.